The primary structure comprises 136 residues: Histone H3.Y (136 aa).

The segment covering 1-16 (MARTKQTARKATAWQA) has biased composition (low complexity). A disordered region spans residues 1–43 (MARTKQTARKATAWQAPRKPLATKAAGKRAPPTGGIKKPHRYK). Asymmetric dimethylarginine is present on R3. R3 carries the citrulline; alternate modification. T4 carries the post-translational modification Phosphothreonine. The residue at position 5 (K5) is an Allysine; alternate. K5 is subject to N6,N6,N6-trimethyllysine; alternate. An N6,N6-dimethyllysine; alternate modification is found at K5. An N6-(2-hydroxyisobutyryl)lysine; alternate modification is found at K5. Residue K5 is modified to N6-(beta-hydroxybutyryl)lysine; alternate. K5 carries the post-translational modification N6-acetyllysine; alternate. N6-crotonyllysine; alternate is present on K5. N6-methyllysine; alternate is present on K5. Position 6 is a 5-glutamyl dopamine; alternate (Q6). Q6 is subject to 5-glutamyl serotonin; alternate. Phosphothreonine is present on T7. R9 is subject to Citrulline; alternate. At R9 the chain carries Symmetric dimethylarginine. K10 carries the post-translational modification N6,N6,N6-trimethyllysine; alternate. K10 bears the N6,N6-dimethyllysine; alternate mark. N6-(2-hydroxyisobutyryl)lysine; alternate is present on K10. K10 bears the N6-(beta-hydroxybutyryl)lysine; alternate mark. The residue at position 10 (K10) is an N6-acetyllysine; alternate. K10 carries the N6-crotonyllysine; alternate modification. An N6-methyllysine; alternate modification is found at K10. The residue at position 10 (K10) is an N6-butyryllysine; alternate. K10 carries the post-translational modification N6-lactoyllysine; alternate. Residue T12 is modified to Phosphothreonine. An Asymmetric dimethylarginine modification is found at R18. A Citrulline; alternate modification is found at R18. N6-(2-hydroxyisobutyryl)lysine; alternate occurs at positions 19, 24, 28, and 37. 3 positions are modified to N6-(beta-hydroxybutyryl)lysine; alternate: K19, K24, and K28. Residues K19, K24, K28, and K37 each carry the N6-acetyllysine; alternate modification. K19, K24, and K28 each carry N6-crotonyllysine; alternate. Residues K19, K24, K28, and K37 each carry the N6-methyllysine; alternate modification. Residues K19 and K24 each carry the N6-butyryllysine; alternate modification. An N6-lactoyllysine; alternate mark is found at K19, K24, and K28. An N6-glutaryllysine; alternate mark is found at K19, K24, and K28. Residues K28 and K37 each carry the N6,N6,N6-trimethyllysine; alternate modification. N6,N6-dimethyllysine; alternate is present on residues K28 and K37. An N6-methyllysine modification is found at K38. Position 42 is a phosphotyrosine (Y42). K57 carries the N6,N6,N6-trimethyllysine; alternate modification. At K57 the chain carries N6-(2-hydroxyisobutyryl)lysine; alternate. At K57 the chain carries N6-(beta-hydroxybutyryl)lysine; alternate. K57 is subject to N6-acetyllysine; alternate. Residue K57 is modified to N6-crotonyllysine; alternate. Position 57 is an N6-lactoyllysine; alternate (K57). N6-glutaryllysine; alternate is present on K57. At K57 the chain carries N6-methyllysine. Position 57 is an N6-succinyllysine; alternate (K57). The residue at position 58 (S58) is a Phosphoserine. K65 is modified (N6-(2-hydroxyisobutyryl)lysine; alternate). At K65 the chain carries N6-methyllysine; alternate. S87 is modified (phosphoserine). T108 carries the post-translational modification Phosphothreonine.

Belongs to the histone H3 family. As to quaternary structure, the nucleosome is a histone octamer containing two molecules each of H2A, H2B, H3 and H4 assembled in one H3-H4 heterotetramer and two H2A-H2B heterodimers. The octamer wraps approximately 147 bp of DNA. Interacts with HIRA, a chaperone required for its incorporation into nucleosomes. Does not interact with DAXX chaperone. Post-translationally, acetylation is generally linked to gene activation. Acetylation on Lys-10 (H3K9ac) impairs methylation at Arg-9 (H3R8me2s). Acetylation on Lys-19 (H3K18ac) and Lys-24 (H3K24ac) favors methylation at Arg-18 (H3R17me). In terms of processing, citrullination at Arg-9 (H3R8ci) and/or Arg-18 (H3R17ci) impairs methylation and represses transcription. Asymmetric dimethylation at Arg-18 (H3R17me2a) is linked to gene activation. Symmetric dimethylation at Arg-9 (H3R8me2s) is linked to gene repression. Asymmetric dimethylation at Arg-3 (H3R2me2a) is linked to gene repression and is mutually exclusive with H3 Lys-5 methylation (H3K4me2 and H3K4me3). H3R2me2a is present at the 3' of genes regardless of their transcription state and is enriched on inactive promoters, while it is absent on active promoters. Post-translationally, methylation at Lys-5 (H3K4me) facilitates subsequent acetylation of H3 and H4. Methylation at Lys-10 (H3K9me) and Lys-28 (H3K27me), which are linked to gene repression, are underrepresented. Methylation at Lys-10 (H3K9me) is a specific target for HP1 proteins (CBX1, CBX3 and CBX5) and prevents subsequent acetylation of H3 and H4. In terms of processing, phosphorylation at Thr-7 (H3T6ph) is a specific tag for epigenetic transcriptional activation that prevents demethylation of Lys-5 (H3K4me) by LSD1/KDM1A. At centromeres, specifically phosphorylated at Thr-12 (H3T11ph) from prophase to early anaphase. Phosphorylation at Thr-12 (H3T11ph) is a specific tag for epigenetic transcriptional activation that promotes demethylation of Lys-10 (H3K9me). Phosphorylation at Tyr-42 (H3Y41ph) promotes exclusion of CBX5 (HP1 alpha) from chromatin. Lysine deamination at Lys-5 (H3K4all) to form allysine. Allysine formation only takes place on H3K4me3 and results in gene repression. Post-translationally, crotonylation (Kcr) is specifically present in male germ cells and marks testis-specific genes in post-meiotic cells, including X-linked genes that escape sex chromosome inactivation in haploid cells. Crotonylation marks active promoters and enhancers and confers resistance to transcriptional repressors. It is also associated with post-meiotically activated genes on autosomes. In terms of processing, butyrylation of histones marks active promoters and competes with histone acetylation. It is present during late spermatogenesis. Expressed at low level in some tissues, such as testis and brain.

The protein localises to the nucleus. It localises to the chromosome. In terms of biological role, primate-specific variant histone H3, which constitutes a core component of nucleosomes. Histone H3.Y-containing nucleosomes accumulate around transcription start sites and have flexible DNA ends, suggesting that they form relaxed chromatin that allows transcription factor access. Histone H1 binds less efficiently to histone H3.Y-containing nucleosomes. Nucleosomes wrap and compact DNA into chromatin, limiting DNA accessibility to the cellular machineries which require DNA as a template. Histones thereby play a central role in transcription regulation, DNA repair, DNA replication and chromosomal stability. DNA accessibility is regulated via a complex set of post-translational modifications of histones, also called histone code, and nucleosome remodeling. This Homo sapiens (Human) protein is Histone H3.Y.